Here is an 810-residue protein sequence, read N- to C-terminus: Leucine--tRNA ligase (810 aa).

Positions 41–52 (PYPSGQGLHVGH) match the 'HIGH' region motif. The 'KMSKS' region signature appears at 582 to 586 (KMSKS). Lysine 585 contributes to the ATP binding site.

The protein belongs to the class-I aminoacyl-tRNA synthetase family.

It is found in the cytoplasm. The enzyme catalyses tRNA(Leu) + L-leucine + ATP = L-leucyl-tRNA(Leu) + AMP + diphosphate. This is Leucine--tRNA ligase from Oenococcus oeni (strain ATCC BAA-331 / PSU-1).